The sequence spans 227 residues: Translation initiation factor 6 (227 aa).

Belongs to the eIF-6 family.

In terms of biological role, binds to the 50S ribosomal subunit and prevents its association with the 30S ribosomal subunit to form the 70S initiation complex. The protein is Translation initiation factor 6 of Methanococcus maripaludis (strain DSM 14266 / JCM 13030 / NBRC 101832 / S2 / LL).